Consider the following 348-residue polypeptide: Cyclin-dependent kinase inhibitor 1C (348 aa).

Arginine 109 is modified (omega-N-methylarginine). The disordered stretch occupies residues 115 to 348 (VAVIPRSGPP…VEQTPRKRLR (234 aa)). Acidic residues-rich tracts occupy residues 207–220 (QGEE…DELG) and 227–274 (QGEE…QDEN). Positions 275 to 284 (QEQRGQELKD) are enriched in basic and acidic residues. A Nuclear localization signal motif is present at residues 309–312 (KRKR).

The protein belongs to the CDI family. Interacts with PCNA. Expressed in the heart, brain, lung, skeletal muscle, kidney, pancreas and testis. High levels are seen in the placenta while low levels are seen in the liver.

Its subcellular location is the nucleus. In terms of biological role, potent tight-binding inhibitor of several G1 cyclin/CDK complexes (cyclin E-CDK2, cyclin D2-CDK4, and cyclin A-CDK2) and, to lesser extent, of the mitotic cyclin B-CDC2. Negative regulator of cell proliferation. May play a role in maintenance of the non-proliferative state throughout life. This chain is Cyclin-dependent kinase inhibitor 1C (Cdkn1c), found in Mus musculus (Mouse).